Consider the following 318-residue polypeptide: NADH-ubiquinone oxidoreductase chain 1 (318 aa).

8 helical membrane-spanning segments follow: residues 2 to 22, 70 to 90, 102 to 122, 147 to 167, 171 to 191, 222 to 242, 253 to 273, and 294 to 314; these read FLTN…FLTL, MFLM…IPLP, LLFM…SGWA, AIIL…TLII, YMWL…STLA, LFFL…TILF, ELYT…FLWI, and LPLT…TAAI.

The protein belongs to the complex I subunit 1 family.

It localises to the mitochondrion inner membrane. The enzyme catalyses a ubiquinone + NADH + 5 H(+)(in) = a ubiquinol + NAD(+) + 4 H(+)(out). In terms of biological role, core subunit of the mitochondrial membrane respiratory chain NADH dehydrogenase (Complex I) that is believed to belong to the minimal assembly required for catalysis. Complex I functions in the transfer of electrons from NADH to the respiratory chain. The immediate electron acceptor for the enzyme is believed to be ubiquinone. The sequence is that of NADH-ubiquinone oxidoreductase chain 1 (MT-ND1) from Diaemus youngi (White-winged vampire bat).